A 214-amino-acid chain; its full sequence is Large ribosomal subunit protein uL3 (214 aa).

The disordered stretch occupies residues 136-156; it reads THGNSLSHRAPGSIGQNQTPG. An N5-methylglutamine modification is found at Gln-153.

This sequence belongs to the universal ribosomal protein uL3 family. As to quaternary structure, part of the 50S ribosomal subunit. Forms a cluster with proteins L14 and L19. Post-translationally, methylated by PrmB.

Its function is as follows. One of the primary rRNA binding proteins, it binds directly near the 3'-end of the 23S rRNA, where it nucleates assembly of the 50S subunit. This Thioalkalivibrio sulfidiphilus (strain HL-EbGR7) protein is Large ribosomal subunit protein uL3.